Here is an 885-residue protein sequence, read N- to C-terminus: Alanine--tRNA ligase (885 aa).

4 residues coordinate Zn(2+): histidine 569, histidine 573, cysteine 672, and histidine 676.

The protein belongs to the class-II aminoacyl-tRNA synthetase family. It depends on Zn(2+) as a cofactor.

The protein resides in the cytoplasm. It carries out the reaction tRNA(Ala) + L-alanine + ATP = L-alanyl-tRNA(Ala) + AMP + diphosphate. Functionally, catalyzes the attachment of alanine to tRNA(Ala) in a two-step reaction: alanine is first activated by ATP to form Ala-AMP and then transferred to the acceptor end of tRNA(Ala). Also edits incorrectly charged Ser-tRNA(Ala) and Gly-tRNA(Ala) via its editing domain. This chain is Alanine--tRNA ligase, found in Chlorobaculum tepidum (strain ATCC 49652 / DSM 12025 / NBRC 103806 / TLS) (Chlorobium tepidum).